Reading from the N-terminus, the 160-residue chain is UPF0262 protein Mrad2831_3513 (160 aa).

The protein belongs to the UPF0262 family.

This chain is UPF0262 protein Mrad2831_3513, found in Methylobacterium radiotolerans (strain ATCC 27329 / DSM 1819 / JCM 2831 / NBRC 15690 / NCIMB 10815 / 0-1).